The primary structure comprises 754 residues: 1,4-alpha-glucan branching enzyme GlgB (754 aa).

Asp431 serves as the catalytic Nucleophile. Catalysis depends on Glu484, which acts as the Proton donor.

The protein belongs to the glycosyl hydrolase 13 family. GlgB subfamily. As to quaternary structure, monomer.

The enzyme catalyses Transfers a segment of a (1-&gt;4)-alpha-D-glucan chain to a primary hydroxy group in a similar glucan chain.. The protein operates within glycan biosynthesis; glycogen biosynthesis. Its function is as follows. Catalyzes the formation of the alpha-1,6-glucosidic linkages in glycogen by scission of a 1,4-alpha-linked oligosaccharide from growing alpha-1,4-glucan chains and the subsequent attachment of the oligosaccharide to the alpha-1,6 position. The sequence is that of 1,4-alpha-glucan branching enzyme GlgB from Prochlorococcus marinus (strain AS9601).